An 85-amino-acid chain; its full sequence is Homeobox protein knotted-1-like 7 (85 aa).

In terms of domain architecture, ELK spans 1–21 (ELKNELKQGYKEKLVDIREEI). A DNA-binding region (homeobox; TALE-type) is located at residues 22 to 85 (MRKRRAGKLP…NQRKRNWHSN (64 aa)).

The protein belongs to the TALE/KNOX homeobox family. Expressed in all tissues examined. Highest expression in leaves.

It is found in the nucleus. This Zea mays (Maize) protein is Homeobox protein knotted-1-like 7 (KNOX7).